The following is a 1264-amino-acid chain: Box A-binding factor (1264 aa).

The span at 1-11 (MTKTTKPKEKA) shows a compositional bias: basic and acidic residues. Disordered regions lie at residues 1 to 25 (MTKT…SGLG), 161 to 200 (TASD…ESVK), 234 to 253 (LISH…QHQQ), 405 to 463 (QLHQ…HALS), 523 to 585 (NQTQ…SAAT), and 599 to 627 (HNSS…PAFQ). Residues 16 to 25 (AVIGSGSGLG) show a composition bias toward gly residues. Low complexity predominate over residues 161–171 (TASDTAATSEA). The span at 189–198 (SKAQNDASES) shows a compositional bias: polar residues. The span at 409–421 (QQHHHQQQLHHHQ) shows a compositional bias: basic residues. Composition is skewed to low complexity over residues 422-438 (QQQQ…QQQQ), 447-459 (STSS…PSSS), and 523-554 (NQTQ…QQQQ). Over residues 555-564 (QHHHNQHQHH) the composition is skewed to basic residues. 2 stretches are compositionally biased toward low complexity: residues 565–585 (NSSS…SAAT) and 599–614 (HNSS…RSSH). Residues 803-827 (CSNCHTTHTSLWRRNPAGEPVCNAC) form a GATA-type zinc finger. Disordered stretches follow at residues 841-867 (TMKK…SKSK), 899-1048 (DDMK…SNEN), and 1181-1202 (EEMD…QHGE). 2 stretches are compositionally biased toward low complexity: residues 909–950 (PYNS…GSTS) and 985–1007 (QMSP…HSPS). The span at 1008–1023 (TPTSIFNTPSPTHQLH) shows a compositional bias: polar residues. Low complexity-rich tracts occupy residues 1024–1048 (NNNN…SNEN) and 1185–1200 (QSQQ…QQQH). A phosphoserine mark is found at Ser1208 and Ser1210.

Interacts (via GATA-type Zn-finger domain) with Bfc; this interaction enhances srp binding to the promoter of crq/croquemort.

The protein localises to the nucleus. Functionally, may function as a transcriptional activator protein and may play a key role in the organogenesis of the fat body. Binds a sequence element (5'-[TA]GATAA-3') found in the larval promoters of all known alcohol dehydrogenase (ADH) genes. Acts as a homeotic gene downstream of the terminal gap gene HKB to promote morphogenesis and differentiation of anterior and posterior midgut. Together with transcriptional cofactor Bfc directly binds the promoter of phagocytic receptor crq/croquemort to upregulate its expression and stimulate efferocytosis in response to apoptotic cells, including during embryogenesis. The sequence is that of Box A-binding factor (srp) from Drosophila melanogaster (Fruit fly).